The primary structure comprises 376 residues: Light-dependent chlorophyll f synthase (376 aa).

The tract at residues 1–22 (MKLESDHVIATSDSSDYTSEPT) is disordered. Over residues 11–22 (TSDSSDYTSEPT) the composition is skewed to polar residues. 5 helical membrane-spanning segments follow: residues 51–68 (YVGW…TAAT), 140–155 (HFLI…EWEL), 164–178 (WISL…ASVS), 219–240 (LHQL…HGSL), and 298–312 (FLAA…SAAL). Residue histidine 140 coordinates a chlorophyll. Histidine 220 contacts a chlorophyll.

This sequence belongs to the reaction center PufL/M/PsbA/D family. As to quaternary structure, homodimer.

It localises to the cellular thylakoid membrane. Synthesizes chlorophyll f or chlorophyllide f (Chl f, 2-formyl chlorophyll a), probably by oxidation of chlorophyll a or chlorophyllide a and reduction of plastoquinone. The reaction is probably light-dependent. Chl f absorbs far red light (FRL, 707 nm in 100% methanol), and is synthesized when cells are grown in FRL, where it provides the advantage of extending the spectral range of harvested light in terrestrial cyanobacteria. When ectopically expressed in Synechococcus PCC 7002 (which does not grow in FRL and does not make Chl f) produces Chl f (0.059% of total chlorophyll). This is Light-dependent chlorophyll f synthase from Chlorogloeopsis fritschii (strain PCC 9212).